The sequence spans 377 residues: Nitric oxide reductase FlRd-NAD(+) reductase (377 aa).

The protein belongs to the FAD-dependent oxidoreductase family. Requires FAD as cofactor.

The protein localises to the cytoplasm. It catalyses the reaction 2 reduced [nitric oxide reductase rubredoxin domain] + NAD(+) + H(+) = 2 oxidized [nitric oxide reductase rubredoxin domain] + NADH. The protein operates within nitrogen metabolism; nitric oxide reduction. One of at least two accessory proteins for anaerobic nitric oxide (NO) reductase. Reduces the rubredoxin moiety of NO reductase. In Escherichia coli O81 (strain ED1a), this protein is Nitric oxide reductase FlRd-NAD(+) reductase.